A 728-amino-acid chain; its full sequence is Tripartite terminase subunit 1 (728 aa).

A C3H1-type zinc finger spans residues 186 to 214 (CASCFAEAAMLPNQGESVLSMLAAVNCNH). The segment at 239–278 (ARAAGRAGGGRESERRGREDADDEEDDEEEPRDGQGDAGD) is disordered. Residues 247-257 (GGRESERRGRE) are compositionally biased toward basic and acidic residues. Over residues 258–269 (DADDEEDDEEEP) the composition is skewed to acidic residues. 653–660 (YNRVWEKS) contributes to the ATP binding site.

It belongs to the herpesviridae TRM1 protein family. In terms of assembly, associates with TRM2 and TRM3 to form the tripartite terminase complex. Interacts with portal protein.

Its subcellular location is the host nucleus. Its function is as follows. Component of the molecular motor that translocates viral genomic DNA in empty capsid during DNA packaging. Forms a tripartite terminase complex together with TRM2 and TRM3 in the host cytoplasm. Once the complex reaches the host nucleus, it interacts with the capsid portal vertex. This portal forms a ring in which genomic DNA is translocated into the capsid. TRM1 carries an endonuclease activity that plays an important role for the cleavage of concatemeric viral DNA into unit length genomes. The polypeptide is Tripartite terminase subunit 1 (Equine herpesvirus 2 (strain 86/87) (EHV-2)).